The following is a 233-amino-acid chain: Biosynthetic peptidoglycan transglycosylase (233 aa).

The chain crosses the membrane as a helical span at residues 8 to 28; that stretch reads LIALPVGIFIFFNAYVYGNII.

The protein belongs to the glycosyltransferase 51 family.

It localises to the cell inner membrane. It catalyses the reaction [GlcNAc-(1-&gt;4)-Mur2Ac(oyl-L-Ala-gamma-D-Glu-L-Lys-D-Ala-D-Ala)](n)-di-trans,octa-cis-undecaprenyl diphosphate + beta-D-GlcNAc-(1-&gt;4)-Mur2Ac(oyl-L-Ala-gamma-D-Glu-L-Lys-D-Ala-D-Ala)-di-trans,octa-cis-undecaprenyl diphosphate = [GlcNAc-(1-&gt;4)-Mur2Ac(oyl-L-Ala-gamma-D-Glu-L-Lys-D-Ala-D-Ala)](n+1)-di-trans,octa-cis-undecaprenyl diphosphate + di-trans,octa-cis-undecaprenyl diphosphate + H(+). It participates in cell wall biogenesis; peptidoglycan biosynthesis. Its function is as follows. Peptidoglycan polymerase that catalyzes glycan chain elongation from lipid-linked precursors. This Neisseria meningitidis serogroup C (strain 053442) protein is Biosynthetic peptidoglycan transglycosylase.